The sequence spans 594 residues: Putative 3,4-dihydroxy-2-butanone kinase (594 aa).

The 331-residue stretch at 11 to 341 folds into the DhaK domain; the sequence is DPNDVVTEFI…LDAPTKAPNW (331 aa). Substrate is bound by residues 62 to 65, Lys-113, and Asp-118; that span reads GSGH. His-226 serves as the catalytic Tele-hemiaminal-histidine intermediate. A disordered region spans residues 339–358; it reads PNWPVGAEGNRPPAKIPVPL. In terms of domain architecture, DhaL spans 381 to 585; sequence HILETAIEAA…AAAWYRAAAL (205 aa). Residues 410–413, 455–456, Gly-499, 507–508, and 570–572 contribute to the ATP site; these read DGDC, TS, TL, and DPG.

This sequence belongs to the dihydroxyacetone kinase (DAK) family.

This is Putative 3,4-dihydroxy-2-butanone kinase (DHBK) from Solanum lycopersicum (Tomato).